The chain runs to 511 residues: Maturase K (511 aa).

The protein belongs to the intron maturase 2 family. MatK subfamily.

It localises to the plastid. The protein localises to the chloroplast. In terms of biological role, usually encoded in the trnK tRNA gene intron. Probably assists in splicing its own and other chloroplast group II introns. The protein is Maturase K of Mandragora officinarum (Mandrake).